A 1017-amino-acid chain; its full sequence is Disease resistance protein RML1B (1017 aa).

Residues 12–176 (YKFNVFASFH…KIARDVLDKL (165 aa)) enclose the TIR domain. The active site involves E87. The region spanning 191–447 (EAHLREIKSL…HIAIFFNKED (257 aa)) is the NB-ARC domain. LRR repeat units lie at residues 539 to 562 (ISRI…QFLK), 583 to 605 (PCLL…TFNP), 606 to 628 (EHLV…TQPL), 629 to 652 (KNLK…SNAT), 654 to 675 (LEYL…ISHL), 676 to 698 (HKLE…HMNL), 699 to 724 (ESLQ…NIRY), 738 to 760 (CPGL…THLP), 761 to 782 (TSLT…CFKS), and 784 to 809 (HQLK…SLLT).

It carries out the reaction NAD(+) + H2O = ADP-D-ribose + nicotinamide + H(+). Functionally, TIR-NB-LRR receptor-like protein that confers resistance to the pathogen Leptosphaeria maculans (blackleg disease). This Arabidopsis thaliana (Mouse-ear cress) protein is Disease resistance protein RML1B.